The sequence spans 647 residues: Threonine--tRNA ligase (647 aa).

A TGS domain is found at Met-1–Thr-61. Positions Asp-240–Pro-538 are catalytic. The Zn(2+) site is built by Cys-334, His-385, and His-515.

It belongs to the class-II aminoacyl-tRNA synthetase family. In terms of assembly, homodimer. The cofactor is Zn(2+).

It localises to the cytoplasm. It catalyses the reaction tRNA(Thr) + L-threonine + ATP = L-threonyl-tRNA(Thr) + AMP + diphosphate + H(+). In terms of biological role, catalyzes the attachment of threonine to tRNA(Thr) in a two-step reaction: L-threonine is first activated by ATP to form Thr-AMP and then transferred to the acceptor end of tRNA(Thr). Also edits incorrectly charged L-seryl-tRNA(Thr). The sequence is that of Threonine--tRNA ligase from Streptococcus agalactiae serotype V (strain ATCC BAA-611 / 2603 V/R).